The primary structure comprises 351 residues: MTQAWWRDACHPLDNDAMDQAHARQQQLTKPAGSLGQLEGLAIQLAGLQGCERPILDQVAITIFAGDHGVVEEGISAYPQAVTGQMLRNFVGGGAAISVLARQLQASLEVVDLGTIDAQLELPGVRHLRLGAGTANFACQPAMTENQLQAALQAGRDSALRAAEQGAQLFIGGEMGIGNTTAAAALASVLLSCPAAQLSGPGTGLDNAGVRHKAEVIERALRLHGLRAENPLQALGCVGGFEIAALAGAYIGCAQAGVAVLVDGFICSVAALVAVHLNPQCRAWLLFAHQGAEPGHKALLAALQAEPLLALGLRLGEGSGAALAVPLLRLACALHGQMATFAEAAVADRPA.

Catalysis depends on Glu-317, which acts as the Proton acceptor.

This sequence belongs to the CobT family.

It carries out the reaction 5,6-dimethylbenzimidazole + nicotinate beta-D-ribonucleotide = alpha-ribazole 5'-phosphate + nicotinate + H(+). The protein operates within nucleoside biosynthesis; alpha-ribazole biosynthesis; alpha-ribazole from 5,6-dimethylbenzimidazole: step 1/2. In terms of biological role, catalyzes the synthesis of alpha-ribazole-5'-phosphate from nicotinate mononucleotide (NAMN) and 5,6-dimethylbenzimidazole (DMB). In Pseudomonas putida (strain GB-1), this protein is Nicotinate-nucleotide--dimethylbenzimidazole phosphoribosyltransferase.